A 151-amino-acid chain; its full sequence is 3-hydroxyacyl-[acyl-carrier-protein] dehydratase FabZ (151 aa).

The active site involves His-54.

It belongs to the thioester dehydratase family. FabZ subfamily. In terms of assembly, oligomer. In terms of processing, the N-terminus is blocked.

It localises to the cytoplasm. It carries out the reaction a (3R)-hydroxyacyl-[ACP] = a (2E)-enoyl-[ACP] + H2O. Functionally, involved in unsaturated fatty acids biosynthesis. Catalyzes the dehydration of short chain beta-hydroxyacyl-ACPs and long chain saturated and unsaturated beta-hydroxyacyl-ACPs. The protein is 3-hydroxyacyl-[acyl-carrier-protein] dehydratase FabZ of Escherichia coli (strain SE11).